A 307-amino-acid polypeptide reads, in one-letter code: Putative F-box/LRR-repeat protein 22 (307 aa).

A compositionally biased stretch (polar residues) spans 1–15; it reads MVTSSSSPPLATSQL. The interval 1 to 26 is disordered; the sequence is MVTSSSSPPLATSQLPVMKGEEKPSN. In terms of domain architecture, F-box spans 24-71; the sequence is PSNWAELPPDLLSSILLRLSPLEILENARKVCRSWRRVSKDPLIWRRI. LRR repeat units lie at residues 108-133, 158-183, 185-210, 212-237, and 244-270; these read WRFQ…RVKG, YCSI…KLVG, WSHL…HLQL, SNGL…DLRQ, and FGDL…DYNY. The span at 279-289 shows a compositional bias: acidic residues; sequence IEDEKGEEEEN. Residues 279-307 are disordered; that stretch reads IEDEKGEEEENYSYGSDDTEYGYRRSADF.

The chain is Putative F-box/LRR-repeat protein 22 (FBL22) from Arabidopsis thaliana (Mouse-ear cress).